The sequence spans 1484 residues: MQRSPLERANLFSKLFFSWTKPILKKGYRQHLELSDIYQIPTADSADNLSEKLEREWDRELASKKNPKLINALRRCFFWRFMFYGLLLYLGEVTKAVQPLLLGRIIASYDPDNAHERSIAYYLGIGLCLLFIVRTLLLHPAVFGLHHIGMQMRIALFSLIYKKTLKLSSRVLDKISTGQLVSLLSNNLNKFDEGLALAHFVWIAPLQVMLLMGLLWDLLQASAFCGLAVLVVLVLFQAWLGHRMMKYRDRRAGKINERLVITAEIIENIQSVKAYCWEEAMENMIESLRETELKLTRKAAYMRYFNSSAFFFSGFFVVFLSVLPSMLTKGIVLRKIFTTISFCIVLRMAVTRQFPWAVQMWYDSIGAIYKIQDFLQKEEYKTLEYNLTTTDVVMENVTAFWDEGFGELLVKAKQNDSSRKVSSDDKNLIFSNISLLGPPVLKDISFKIEKGQLLAVAGSTGAGKTSLLMMIMGELEPLEGKIKHSGRISFSPQFSWIMPGTIKENIVFGVSFDEYRYRSVIKACQLEEEISKFAEKDNTVLGEGGITLSGGQRARISLARAVYKDADLYLLDSPFGYLDVLTEKEIFESCVCKLMANKTRILVTSKMEHLKKADKILILHEGSCYFYGAFSELQNLRPDFSSKLMGYDSFDQFSAERRNSILTETLRRFSLDGDAAGSWNETKKQSFKQTGEFGERRKNSILNPLNSIRKFSLVQKAPLQMNCIDETLDEPPERKLSLVPDSEPGEAILPRSNMLNPGPVLRARRRQSVLNLMTRPSIHQGSSLYKKGSASARKMSVAPQSNMSEMDIYSRRLSKDSGLEISEEINEEDLKECFIDDIESTTSVTTWNTYLRYMTIHKKLIFVLMMCLVIFLIEVAASLVGLCLFKDGASRMNSTSNLNHTSTLDWFAVIVTNTSTYYMFYIYVGVADTLLALGFLRGLPLVHSLISVSKILHQKMLHSVLQAPMSTFNTLKTGSILNRFSKDMAILDDLLPLTIFDFIQLLLIVIGAVTVVSALQPYIFLASVPVVIAFVLLRAYFLRTSQQLKQLESEARSPIFTHLITSLKGLWTLRAFGRQTYFEALFHKALNLHTANWFLYLSTLRWFQMRIEMVFVIFFILVTFISILTTGDGEGKVGIVLTLAMNIMGTLQWAVNASIDVDSLMRSVSRVFKFIDMPTEEHRPTHPAKNKDISGVLIIENQHVKREKNWPSGGQMTVQDLTAKYLDGGPAILDNISFSISSGQRVGLLGRTGSGKSTLLFAFLRLLNTEGDIRIDGISWDAVPVQQWRKAFGVIPQKVFIFSGSFRKNLDPYGQWTDQELWKVAEEVGLKSVIEQFPGQLDFVLIDGGYVLSHGHRQLMCLARSVLSKAKILLLDEPSAHLDPITYQVIRKTLKQAFTNCTVILSEHRIEAMLECQRFLVIEENKVRQYESIQKLLNEKSVFKQAISHSDKMKLFPIHRRNSSKRLSRPKITALQEETEEEVQDTRL.

Over 1 to 77 the chain is Cytoplasmic; the sequence is MQRSPLERAN…KLINALRRCF (77 aa). Residues 78–98 form a helical membrane-spanning segment; it reads FWRFMFYGLLLYLGEVTKAVQ. The ABC transmembrane type-1 1 domain maps to 81–365; the sequence is FMFYGLLLYL…WAVQMWYDSI (285 aa). Topologically, residues 99-122 are extracellular; sequence PLLLGRIIASYDPDNAHERSIAYY. A helical transmembrane segment spans residues 123 to 146; it reads LGIGLCLLFIVRTLLLHPAVFGLH. Over 147–195 the chain is Cytoplasmic; it reads HIGMQMRIALFSLIYKKTLKLSSRVLDKISTGQLVSLLSNNLNKFDEGL. The helical transmembrane segment at 196-216 threads the bilayer; it reads ALAHFVWIAPLQVMLLMGLLW. Residues 217–222 are Extracellular-facing; sequence DLLQAS. A helical transmembrane segment spans residues 223-243; the sequence is AFCGLAVLVVLVLFQAWLGHR. At 244–298 the chain is on the cytoplasmic side; it reads MMKYRDRRAGKINERLVITAEIIENIQSVKAYCWEEAMENMIESLRETELKLTRK. A helical membrane pass occupies residues 299–319; the sequence is AAYMRYFNSSAFFFSGFFVVF. Residues 320 to 339 lie on the Extracellular side of the membrane; that stretch reads LSVLPSMLTKGIVLRKIFTT. A helical membrane pass occupies residues 340–358; it reads ISFCIVLRMAVTRQFPWAV. Over 359–859 the chain is Cytoplasmic; it reads QMWYDSIGAI…YLRYMTIHKK (501 aa). Residues tryptophan 401, serine 434, 458 to 465, and glutamine 493 contribute to the ATP site; that span reads GSTGAGKT. An ABC transporter 1 domain is found at 423–646; sequence SDDKNLIFSN…RPDFSSKLMG (224 aa). Cysteine 524 carries the S-palmitoyl cysteine lipid modification. Phosphoserine occurs at positions 549 and 660. The segment at 654-832 is disordered R region; that stretch reads SAERRNSILT…EEINEEDLKE (179 aa). Serine 670 is subject to Phosphoserine; by PKA. Serine 686 carries the post-translational modification Phosphoserine. A Glycyl lysine isopeptide (Lys-Gly) (interchain with G-Cter in ubiquitin) cross-link involves residue lysine 688. Residues serine 700, serine 712, serine 737, serine 768, serine 791, serine 796, and serine 814 each carry the phosphoserine modification. A helical transmembrane segment spans residues 860 to 880; that stretch reads LIFVLMMCLVIFLIEVAASLV. The ABC transmembrane type-1 2 domain occupies 860-1159; it reads LIFVLMMCLV…AVNASIDVDS (300 aa). Over 881–922 the chain is Extracellular; sequence GLCLFKDGASRMNSTSNLNHTSTLDWFAVIVTNTSTYYMFYI. Residues asparagine 893, asparagine 899, and asparagine 913 are each glycosylated (N-linked (GlcNAc...) asparagine). The discontinuously helical transmembrane segment at 923–943 threads the bilayer; that stretch reads YVGVADTLLALGFLRGLPLVH. Residues 944 to 994 lie on the Cytoplasmic side of the membrane; that stretch reads SLISVSKILHQKMLHSVLQAPMSTFNTLKTGSILNRFSKDMAILDDLLPLT. A helical transmembrane segment spans residues 995 to 1015; it reads IFDFIQLLLIVIGAVTVVSAL. The Extracellular portion of the chain corresponds to 1016-1017; the sequence is QP. The chain crosses the membrane as a helical span at residues 1018-1038; that stretch reads YIFLASVPVVIAFVLLRAYFL. Topologically, residues 1039–1099 are cytoplasmic; the sequence is RTSQQLKQLE…TANWFLYLST (61 aa). Residues 1100–1120 traverse the membrane as a helical segment; the sequence is LRWFQMRIEMVFVIFFILVTF. The Extracellular portion of the chain corresponds to 1121 to 1134; that stretch reads ISILTTGDGEGKVG. Residues 1135 to 1155 form a helical membrane-spanning segment; sequence IVLTLAMNIMGTLQWAVNASI. Residues 1156 to 1484 lie on the Cytoplasmic side of the membrane; that stretch reads DVDSLMRSVS…TEEEVQDTRL (329 aa). The region spanning 1212–1445 is the ABC transporter 2 domain; it reads MTVQDLTAKY…KSVFKQAISH (234 aa). ATP-binding positions include tyrosine 1221 and 1246-1253; that span reads GRTGSGKS. Residues 1388 to 1484 form an interaction with GORASP2 region; sequence KTLKQAFTNC…TEEEVQDTRL (97 aa). Residue cysteine 1397 is the site of S-palmitoyl cysteine attachment. Serine 1446 and serine 1460 each carry phosphoserine. Residues 1463-1484 are disordered; the sequence is LSRPKITALQEETEEEVQDTRL. The segment covering 1473–1484 has biased composition (acidic residues); sequence EETEEEVQDTRL. The PDZ-binding signature appears at 1482–1484; sequence TRL.

Belongs to the ABC transporter superfamily. ABCC family. CFTR transporter (TC 3.A.1.202) subfamily. As to quaternary structure, monomer; does not require oligomerization for channel activity. May form oligomers in the membrane. Interacts with SLC26A3, SLC26A6 and NHERF1. Interacts with SHANK2. Interacts with MYO6. Interacts (via C-terminus) with GOPC (via PDZ domain); this promotes CFTR internalization and thereby decreases channel activity. Interacts with SLC4A7 through NHERF1. Found in a complex with MYO5B and RAB11A. Interacts with ANO1. Interacts with SLC26A8. Interacts with AHCYL1; the interaction increases CFTR activity. Interacts with CSE1L. The core-glycosylated form interacts with GORASP2 (via PDZ GRASP-type 1 domain) in respone to ER stress. Interacts with MARCHF2; the interaction leads to CFTR ubiqtuitination and degradation. Interacts with ADGRG2. Post-translationally, N-glycosylated. In terms of processing, phosphorylated; cAMP treatment promotes phosphorylation and activates the channel. Dephosphorylation decreases the ATPase activity (in vitro). Phosphorylation at PKA sites activates the channel. Phosphorylation at PKC sites enhances the response to phosphorylation by PKA. Phosphorylated by AMPK; this inhibits channel activity. Ubiquitinated, leading to its degradation in the lysosome. Deubiquitination by USP10 in early endosomes enhances its endocytic recycling to the cell membrane. Ubiquitinated by RNF185 during ER stress. Ubiquitinated by MARCHF2.

It is found in the apical cell membrane. The protein localises to the early endosome membrane. It localises to the cell membrane. The protein resides in the recycling endosome membrane. Its subcellular location is the endoplasmic reticulum membrane. It is found in the nucleus. It carries out the reaction ATP + H2O + closed Cl(-) channel = ADP + phosphate + open Cl(-) channel.. It catalyses the reaction chloride(in) = chloride(out). The enzyme catalyses hydrogencarbonate(in) = hydrogencarbonate(out). The catalysed reaction is ATP + H2O = ADP + phosphate + H(+). Epithelial ion channel that plays an important role in the regulation of epithelial ion and water transport and fluid homeostasis. Mediates the transport of chloride ions across the cell membrane. Possesses an intrinsic ATPase activity and utilizes ATP to gate its channel; the passive flow of anions through the channel is gated by cycles of ATP binding and hydrolysis by the ATP-binding domains. The ion channel is also permeable to HCO(3)(-); selectivity depends on the extracellular chloride concentration. Exerts its function also by modulating the activity of other ion channels and transporters. Contributes to the regulation of the pH and the ion content of the epithelial fluid layer. Modulates the activity of the epithelial sodium channel (ENaC) complex, in part by regulating the cell surface expression of the ENaC complex. May regulate bicarbonate secretion and salvage in epithelial cells by regulating the transporter SLC4A7. Can inhibit the chloride channel activity of ANO1. Plays a role in the chloride and bicarbonate homeostasis during sperm epididymal maturation and capacitation. This chain is Cystic fibrosis transmembrane conductance regulator, found in Ornithorhynchus anatinus (Duckbill platypus).